Here is a 548-residue protein sequence, read N- to C-terminus: ADP,ATP carrier protein 1 (548 aa).

2 consecutive transmembrane segments (helical) span residues 39–59 and 75–95; these read RPVF…YSVS and SIPY…VFSI. Asn101 carries an N-linked (GlcNAc...) asparagine glycan. Transmembrane regions (helical) follow at residues 107–127, 149–169, 171–191, 204–224, 239–259, 302–322, 350–370, and 374–394; these read VFSI…TVLM, MVFM…SWTS, LMYL…FFAL, FIPL…FSMK, LFFR…IYLI, LVLA…MVEA, IQLA…PALI, and GFLY…ASVF. Residues Asn400 and Asn406 are each glycosylated (N-linked (GlcNAc...) asparagine). Residues 410-430 traverse the membrane as a helical segment; it reads LGFVSIGENLWLEQLLGAIIV. N-linked (GlcNAc...) asparagine glycosylation is present at Asn488. A helical membrane pass occupies residues 494–514; that stretch reads KAAISSLTIVTVITACWGFAV.

It belongs to the ADP/ATP translocase tlc family.

The protein localises to the cell membrane. ATP transporter involved in the uptake of ATP from the host cell cytoplasm. Provides the microsporidian cell with host ATP in exchange for ADP. This is an obligate exchange system. This energy acquiring activity is an important component of microsporidian parasitism. This is ADP,ATP carrier protein 1 (ANC1) from Paranosema grylli (Microsporidian parasite).